Reading from the N-terminus, the 951-residue chain is Serine/threonine-protein kinase 10 (951 aa).

Residues 36–294 (WEIIGELGDG…AAQLLEHPFV (259 aa)) form the Protein kinase domain. Residues 42 to 50 (LGDGAFGKV) and K65 each bind ATP. D157 acts as the Proton acceptor in catalysis. A compositionally biased stretch (acidic residues) spans 319–330 (EENGEVEEEEAS). Positions 319-479 (EENGEVEEEE…DSGSNSASES (161 aa)) are disordered. Polar residues predominate over residues 331 to 343 (DTPSSNKSVSQSA). The span at 345-356 (GEKDKHTGKEHV) shows a compositional bias: basic and acidic residues. The span at 364-373 (PQNTDSQADI) shows a compositional bias: polar residues. 2 stretches are compositionally biased toward basic and acidic residues: residues 374–394 (HSQKRNHEGKNYPEHNRHDAV) and 410–427 (HEPKRNSAAESYRNEEHG). Residues 429–443 (AVSSNQRPKSSQSDR) are compositionally biased toward polar residues. Phosphoserine; by PLK1 occurs at positions 483, 487, and 491. The stretch at 583–723 (EQEMNSKRKF…NKKQQLLRDR (141 aa)) forms a coiled coil. Over residues 785–800 (QERARLPKNQKAEAKT) the composition is skewed to basic and acidic residues. Residues 785 to 804 (QERARLPKNQKAEAKTRMTM) are disordered. The stretch at 898 to 928 (RENLRPRKKALEDELEHKKEEQEMFFRMNEE) forms a coiled coil. A disordered region spans residues 930–951 (AGHPFPSNKPAKFYSFSSPEAS).

This sequence belongs to the protein kinase superfamily. STE Ser/Thr protein kinase family. STE20 subfamily. As to quaternary structure, homodimer. Post-translationally, autophosphorylates. Phosphorylated by plk1/plx1, suggesting the existence of a feedback loop with plk1/plx1. activation of the protein.

The protein resides in the cell membrane. It carries out the reaction L-seryl-[protein] + ATP = O-phospho-L-seryl-[protein] + ADP + H(+). It catalyses the reaction L-threonyl-[protein] + ATP = O-phospho-L-threonyl-[protein] + ADP + H(+). Functionally, may act as a polo kinase kinase by mediating phosphorylation of plk1/plx1 and subsequent activation of plk1/plx1 during oocyte maturation. This is Serine/threonine-protein kinase 10 (stk10) from Xenopus tropicalis (Western clawed frog).